The following is a 381-amino-acid chain: MSRHEGVSCDACLKGNFRGRRYKCLICYDYDLCASCYESGATTTRHTTDHPMQCILTRVDFDLYYGGEAFSVEQPQSFTCPYCGKMGYTETSLQEHVTSEHAETSTEVICPICAALPGGDPNHVTDDFAAHLTLEHRAPRDLDESSGVRHVRRMFHPGRGLGGPRARRSNMHFTSSSTGGLSSSQSSYSPSSREAMDPIAELLSQLSGVRRSAGGQLNSSGPSASQLQQLQMQLQLERQHAQAARQQLETARNASRRTNTSSVTTTITQATATANTANTENSPQALHNSQFLLTRLNDPKMSEAERQSMESERADRSLFVQELLLSTLVREESSSSDEDDRGEMADFGAMGCVDIMPLDVALENLNLKESNKGNEPPPPPL.

S2 carries the N-acetylserine modification. S2 is modified (phosphoserine). The ZZ-type zinc finger occupies H4–D60. C9, C12, C24, C27, C33, C36, H46, and H50 together coordinate Zn(2+). A C2H2-type zinc finger spans residues F78–H101. The segment at M154–E194 is disordered. S169, S189, and S212 each carry phosphoserine. The span at S175–S192 shows a compositional bias: low complexity. Residues A224–N259 adopt a coiled-coil conformation. A phosphoserine mark is found at S335 and S336.

Belongs to the KCMF1 family. In terms of assembly, component of the SIFI complex, composed of KCMF1, UBR4 and calmodulin (CALM1, CALM2 or CALM3). As to expression, testis, liver, kidney, heart and skeletal muscle.

The protein localises to the cytoplasm. The protein resides in the late endosome. It is found in the lysosome. It carries out the reaction S-ubiquitinyl-[E2 ubiquitin-conjugating enzyme]-L-cysteine + [acceptor protein]-L-lysine = [E2 ubiquitin-conjugating enzyme]-L-cysteine + N(6)-ubiquitinyl-[acceptor protein]-L-lysine.. Its pathway is protein modification; protein ubiquitination. Functionally, E3 ubiquitin-protein ligase which accepts ubiquitin from an E2 ubiquitin-conjugating enzyme and then transfers it to targeted substrates, promoting their degradation by the proteasome. Together with UBR4, component of the N-end rule pathway: ubiquitinates proteins bearing specific N-terminal residues that are destabilizing according to the N-end rule, leading to their degradation. Does not ubiquitinate proteins that are acetylated at the N-terminus. Together with UBR4, part of a protein quality control pathway that catalyzes ubiquitination and degradation of proteins that have been oxidized in response to reactive oxygen species (ROS): recognizes proteins with an Arg-CysO3(H) degron at the N-terminus, and mediates assembly of heterotypic 'Lys-63'-/'Lys-27'-linked branched ubiquitin chains on oxidized proteins, leading to their degradation by autophagy. Catalytic component of the SIFI complex, a multiprotein complex required to inhibit the mitochondrial stress response after a specific stress event has been resolved: ubiquitinates and degrades (1) components of the HRI-mediated signaling of the integrated stress response, such as DELE1 and EIF2AK1/HRI, as well as (2) unimported mitochondrial precursors. Within the SIFI complex, UBR4 initiates ubiquitin chain that are further elongated or branched by KCMF1. The protein is E3 ubiquitin-protein ligase KCMF1 of Mus musculus (Mouse).